A 154-amino-acid chain; its full sequence is Transcriptional repressor NrdR (154 aa).

A zinc finger lies at 3 to 34; it reads CPFCGAHDTKVIDSRLVAEGDQVRRRRECLAC. The 91-residue stretch at 49–139 folds into the ATP-cone domain; it reads PRLIKQDGSR…VYRRFQDLNE (91 aa).

This sequence belongs to the NrdR family. The cofactor is Zn(2+).

Negatively regulates transcription of bacterial ribonucleotide reductase nrd genes and operons by binding to NrdR-boxes. This is Transcriptional repressor NrdR from Pseudomonas aeruginosa (strain LESB58).